The chain runs to 382 residues: Flap endonuclease 1 (382 aa).

The interval 1–104 (MGIKGLSQVI…GELEKRTERR (104 aa)) is N-domain. A Mg(2+)-binding site is contributed by aspartate 34. 2 residues coordinate DNA: arginine 47 and arginine 70. Mg(2+)-binding residues include aspartate 86, glutamate 158, glutamate 160, aspartate 179, and aspartate 181. The tract at residues 122 to 253 (EAEKFERRLV…KKAVELIKQH (132 aa)) is I-domain. Glutamate 158 lines the DNA pocket. Glycine 231 and aspartate 233 together coordinate DNA. Residue aspartate 233 participates in Mg(2+) binding. The interval 336–344 (TQGRIDSFF) is interaction with PCNA. Residues 359-368 (KAQEEAEKMK) are compositionally biased toward basic and acidic residues. The tract at residues 359-382 (KAQEEAEKMKKGGKKSGPPKKKAK) is disordered. The segment covering 369–382 (KGGKKSGPPKKKAK) has biased composition (basic residues).

This sequence belongs to the XPG/RAD2 endonuclease family. FEN1 subfamily. Interacts with PCNA. Three molecules of crn-1 bind to one PCNA trimer with each molecule binding to one PCNA monomer. PCNA stimulates the nuclease activity without altering cleavage specificity. Requires Mg(2+) as cofactor. In terms of processing, phosphorylated. Phosphorylation upon DNA damage induces relocalization to the nuclear plasma.

The protein localises to the nucleus. It localises to the nucleolus. Its subcellular location is the nucleoplasm. It is found in the mitochondrion. Structure-specific nuclease with 5'-flap endonuclease and 5'-3' exonuclease activities involved in DNA replication and repair. During DNA replication, cleaves the 5'-overhanging flap structure that is generated by displacement synthesis when DNA polymerase encounters the 5'-end of a downstream Okazaki fragment. It enters the flap from the 5'-end and then tracks to cleave the flap base, leaving a nick for ligation. Also involved in the long patch base excision repair (LP-BER) pathway, by cleaving within the apurinic/apyrimidinic (AP) site-terminated flap. Acts as a genome stabilization factor that prevents flaps from equilibrating into structures that lead to duplications and deletions. Also possesses 5'-3' exonuclease activity on nicked or gapped double-stranded DNA, and exhibits RNase H activity. Also involved in replication and repair of rDNA and in repairing mitochondrial DNA. This chain is Flap endonuclease 1, found in Caenorhabditis briggsae.